The following is an 841-amino-acid chain: Protein NLP6 (841 aa).

One can recognise an RWP-RK domain in the interval 539 to 624 (EAKTVKKSER…IDSVQGADGS (86 aa)). The tract at residues 649–682 (NCPPTSTSPLSNLQDVKIENRDAEDSAGSSTSRA) is disordered. Polar residues predominate over residues 651–662 (PPTSTSPLSNLQ). Residues 741–823 (LVSIKATYRE…NTLRLSVHDV (83 aa)) form the PB1 domain.

The protein resides in the nucleus. Probable transcription factor. The polypeptide is Protein NLP6 (NLP6) (Arabidopsis thaliana (Mouse-ear cress)).